A 68-amino-acid chain; its full sequence is U-scoloptoxin(02)-Er1a (68 aa).

The signal sequence occupies residues 1–20 (MIVSLRCCLLLVALLITVET). 3 disulfides stabilise this stretch: C30–C52, C38–C58, and C42–C60.

This sequence belongs to the invertebrate defensin family. In terms of tissue distribution, expressed by the venom gland.

It localises to the secreted. In terms of biological role, antibacterial peptide mostly active against Gram-positive bacteria. This is U-scoloptoxin(02)-Er1a from Ethmostigmus rubripes (Giant centipede).